A 35-amino-acid polypeptide reads, in one-letter code: Photosystem II reaction center protein T (35 aa).

A helical membrane pass occupies residues alanine 3 to phenylalanine 23.

This sequence belongs to the PsbT family. PSII is composed of 1 copy each of membrane proteins PsbA, PsbB, PsbC, PsbD, PsbE, PsbF, PsbH, PsbI, PsbJ, PsbK, PsbL, PsbM, PsbT, PsbY, PsbZ, Psb30/Ycf12, at least 3 peripheral proteins of the oxygen-evolving complex and a large number of cofactors. It forms dimeric complexes.

The protein resides in the plastid. It localises to the chloroplast thylakoid membrane. In terms of biological role, found at the monomer-monomer interface of the photosystem II (PS II) dimer, plays a role in assembly and dimerization of PSII. PSII is a light-driven water plastoquinone oxidoreductase, using light energy to abstract electrons from H(2)O, generating a proton gradient subsequently used for ATP formation. The protein is Photosystem II reaction center protein T of Cunninghamia lanceolata (China fir).